We begin with the raw amino-acid sequence, 438 residues long: Aspartate--tRNA(Asp/Asn) ligase (438 aa).

Glu-176 provides a ligand contact to L-aspartate. Positions 198–201 (QLYK) are aspartate. Arg-220 contributes to the L-aspartate binding site. ATP-binding positions include 220-222 (RAE), 228-230 (RHL), and Glu-361. Positions 361 and 364 each coordinate Mg(2+). Positions 364 and 368 each coordinate L-aspartate. ATP is bound at residue 409 to 412 (GADR).

It belongs to the class-II aminoacyl-tRNA synthetase family. Type 2 subfamily. As to quaternary structure, homodimer. Mg(2+) is required as a cofactor.

It localises to the cytoplasm. The catalysed reaction is tRNA(Asx) + L-aspartate + ATP = L-aspartyl-tRNA(Asx) + AMP + diphosphate. Functionally, aspartyl-tRNA synthetase with relaxed tRNA specificity since it is able to aspartylate not only its cognate tRNA(Asp) but also tRNA(Asn). Reaction proceeds in two steps: L-aspartate is first activated by ATP to form Asp-AMP and then transferred to the acceptor end of tRNA(Asp/Asn). The protein is Aspartate--tRNA(Asp/Asn) ligase of Methanococcus maripaludis (strain C5 / ATCC BAA-1333).